The sequence spans 77 residues: Major pilus subunit operon regulatory protein (77 aa).

This sequence to E.coli AfaF and DaaF.

Its function is as follows. Plays a role in the inhibition of methylation at the GATC1028 site located in the regulatory region upstream of the pabA promoter. May, in conjunction with the Mbf (methylation blocking factor), inhibits deoxyadenosine methylase from methylating the GATC1028 site. The protein is Major pilus subunit operon regulatory protein (papI) of Escherichia coli.